The sequence spans 310 residues: Porphobilinogen deaminase (310 aa).

S-(dipyrrolylmethanemethyl)cysteine is present on Cys241.

It belongs to the HMBS family. As to quaternary structure, monomer. The cofactor is dipyrromethane.

The enzyme catalyses 4 porphobilinogen + H2O = hydroxymethylbilane + 4 NH4(+). Its pathway is porphyrin-containing compound metabolism; protoporphyrin-IX biosynthesis; coproporphyrinogen-III from 5-aminolevulinate: step 2/4. In terms of biological role, tetrapolymerization of the monopyrrole PBG into the hydroxymethylbilane pre-uroporphyrinogen in several discrete steps. This is Porphobilinogen deaminase from Pelobacter propionicus (strain DSM 2379 / NBRC 103807 / OttBd1).